The chain runs to 843 residues: Molybdenum cofactor sulfurase (843 aa).

The residue at position 241 (Lys241) is an N6-(pyridoxal phosphate)lysine. Residue Cys405 is part of the active site. Positions 657–836 (QYLRKFVMPG…LMVGDIVIPS (180 aa)) constitute an MOSC domain.

Belongs to the class-V pyridoxal-phosphate-dependent aminotransferase family. MOCOS subfamily. Pyridoxal 5'-phosphate is required as a cofactor.

It carries out the reaction Mo-molybdopterin + L-cysteine + AH2 = thio-Mo-molybdopterin + L-alanine + A + H2O. Its function is as follows. Sulfurates the molybdenum cofactor. Sulfation of molybdenum is essential for xanthine dehydrogenase (XDH) and aldehyde oxidase (ADO) enzymes in which molybdenum cofactor is liganded by 1 oxygen and 1 sulfur atom in active form. The chain is Molybdenum cofactor sulfurase from Aspergillus fumigatus (strain CBS 144.89 / FGSC A1163 / CEA10) (Neosartorya fumigata).